We begin with the raw amino-acid sequence, 866 residues long: Potassium voltage-gated channel subfamily KQT member 3 (866 aa).

Residues Met-1–Lys-42 are disordered. Residues Met-1–Gly-120 lie on the Cytoplasmic side of the membrane. Positions Ala-11 to Ala-25 are enriched in gly residues. Residues Ala-26–Ala-36 show a composition bias toward low complexity. Phosphothreonine is present on Thr-81. Residues Trp-121–Thr-143 form a helical membrane-spanning segment. The Extracellular portion of the chain corresponds to Thr-144–Gly-153. The helical transmembrane segment at Asp-154–Ile-175 threads the bilayer. Topologically, residues Trp-176–Phe-193 are cytoplasmic. Residues Ala-194–Val-213 form a helical membrane-spanning segment. The Extracellular portion of the chain corresponds to Ala-214–Ser-225. A helical; Voltage-sensor membrane pass occupies residues Leu-226 to Gly-244. A 1,2-diacyl-sn-glycero-3-phospho-(1D-myo-inositol-4,5-bisphosphate) is bound at residue Arg-243. The Cytoplasmic portion of the chain corresponds to Gly-245 to Ala-256. Residues His-257–Val-282 traverse the membrane as a helical segment. Residue Lys-259 participates in a 1,2-diacyl-sn-glycero-3-phospho-(1D-myo-inositol-4,5-bisphosphate) binding. Topologically, residues Glu-283–Thr-302 are extracellular. The segment at residues Tyr-303 to Ala-315 is an intramembrane region (pore-forming). The Selectivity filter signature appears at Thr-316–Asp-321. The Extracellular portion of the chain corresponds to Thr-316 to Thr-326. A helical membrane pass occupies residues Trp-327–Ser-353. At Gly-354–Thr-866 the chain is on the cytoplasmic side. A mediates interaction with calmodulin region spans residues Ala-356 to Thr-537. A 1,2-diacyl-sn-glycero-3-phospho-(1D-myo-inositol-4,5-bisphosphate) is bound at residue Lys-366. Disordered regions lie at residues Pro-574 to Ser-617, Gly-656 to Arg-676, and Gln-757 to Thr-866. The segment covering Glu-837–Thr-866 has biased composition (polar residues).

This sequence belongs to the potassium channel family. KQT (TC 1.A.1.15) subfamily. Kv7.3/KCNQ3 sub-subfamily. As to quaternary structure, heterotetramer with KCNQ2; forms heterotetrameric native M-channel responsible for the M-current. Interacts with calmodulin; the interaction is calcium-independent, constitutive and participates in the proper assembly of a functional M-channel. Heteromultimer with KCNQ5. May associate with KCNE2. Interacts with IQCJ-SCHIP1. Interacts (via the pore module) with SLC5A3/SMIT1; forms a coregulatory complex that alters ion selectivity, voltage dependence and gating kinetics of the channel. In terms of processing, KCNQ2/KCNQ3 are ubiquitinated by NEDD4L. Ubiquitination leads to protein degradation. Degradation induced by NEDD4L is inhibited by USP36.

The protein localises to the cell membrane. The catalysed reaction is K(+)(in) = K(+)(out). It catalyses the reaction Rb(+)(in) = Rb(+)(out). It carries out the reaction Cs(+)(in) = Cs(+)(out). The enzyme catalyses Na(+)(in) = Na(+)(out). Phosphatidylinositol-4,5-bisphosphate (PIP2) potentiates the activation of KCNQ channels by enhancing the electro-mechanical coupling of the voltage-sensing domain (VSD) and the pore-forming domain (PD). In the closed state of the channel, PIP2 is anchored at the S2-S3 loop; upon channel activation, PIP2 interacts with the S4-S5 linker and is involved in channel gating. Calcium suppresses KCNQ2-KCNQ3 channel currents, with calcium-bound calmodulin inducing a change in channel configuration which leads to the reduction of channel affinity for PIP2 and subsequent current suppression. Pore-forming subunit of the voltage-gated potassium (Kv) M-channel which is responsible for the M-current, a key controller of neuronal excitability. M-channel is composed of pore-forming subunits KCNQ2 and KCNQ3 assembled as heterotetramers. The native M-current has a slowly activating and deactivating potassium conductance which plays a critical role in determining the subthreshold electrical excitability of neurons as well as the responsiveness to synaptic inputs. M-channel is selectively permeable in vitro to other cations besides potassium, in decreasing order of affinity K(+) &gt; Rb(+) &gt; Cs(+) &gt; Na(+). M-channel association with SLC5A3/SMIT1 alters channel ion selectivity, increasing Na(+) and Cs(+) permeation relative to K(+). Suppressed by activation of M1 muscarinic acetylcholine receptors. KCNQ3 also associates with KCNQ5 to form a functional channel in vitro and may also contribute to the M-current in brain. This Bos taurus (Bovine) protein is Potassium voltage-gated channel subfamily KQT member 3.